Consider the following 225-residue polypeptide: 7-carboxy-7-deazaguanine synthase (225 aa).

Substrate contacts are provided by residues 12-14 and Arg-27; that span reads IQG. The Radical SAM core domain occupies 18–225; it reads YIGVRQLFVR…PQVHKYLGVR (208 aa). Positions 31, 35, and 38 each coordinate [4Fe-4S] cluster. Thr-40 is a Mg(2+) binding site. Thr-80 lines the substrate pocket. Gly-82 contributes to the S-adenosyl-L-methionine binding site.

The protein belongs to the radical SAM superfamily. 7-carboxy-7-deazaguanine synthase family. In terms of assembly, homodimer. It depends on [4Fe-4S] cluster as a cofactor. S-adenosyl-L-methionine is required as a cofactor. The cofactor is Mg(2+).

It catalyses the reaction 6-carboxy-5,6,7,8-tetrahydropterin + H(+) = 7-carboxy-7-deazaguanine + NH4(+). It participates in purine metabolism; 7-cyano-7-deazaguanine biosynthesis. Functionally, catalyzes the complex heterocyclic radical-mediated conversion of 6-carboxy-5,6,7,8-tetrahydropterin (CPH4) to 7-carboxy-7-deazaguanine (CDG), a step common to the biosynthetic pathways of all 7-deazapurine-containing compounds. The chain is 7-carboxy-7-deazaguanine synthase from Archaeoglobus fulgidus (strain ATCC 49558 / DSM 4304 / JCM 9628 / NBRC 100126 / VC-16).